A 717-amino-acid polypeptide reads, in one-letter code: Homeobox protein araucan (717 aa).

Disordered stretches follow at residues 46 to 80, 94 to 130, 317 to 371, 395 to 418, 478 to 516, 549 to 615, and 675 to 717; these read APAM…PNAL, GGSS…GGGG, NKMT…AIDE, SGGY…YHHQ, TPPP…AGRD, TNNS…ASQR, and ARLG…KFTN. The segment covering 94–103 has biased composition (gly residues); the sequence is GGSSAGGGGP. The segment at residues 255–317 is a DNA-binding region (homeobox; TALE-type); that stretch reads LAARRKNATR…NARRRLKKEN (63 aa). Basic and acidic residues predominate over residues 317 to 327; that stretch reads NKMTWEPKNRT. Phosphoserine is present on serine 336. The segment covering 337–347 has biased composition (basic and acidic residues); that stretch reads DDEKDKEDLEP. Residues 395-410 show a composition bias toward gly residues; sequence SGGYPGGGGSSSGHPG. Composition is skewed to low complexity over residues 492 to 507, 559 to 589, 599 to 614, and 687 to 698; these read QQQQ…AQHQ, PPQQ…GPII, QQQQ…TASQ, and SSGNSSSSSSSS.

Belongs to the TALE/IRO homeobox family.

It localises to the nucleus. Controls proneural and vein forming genes. Positive transcriptional controller of AC-SC (achaete-scute). May act as an activator that interacts with the transcriptional complex assembled on the AC and SC promoters and participates in transcription initiation. The polypeptide is Homeobox protein araucan (ara) (Drosophila melanogaster (Fruit fly)).